The sequence spans 160 residues: Large ribosomal subunit protein eL21 (160 aa).

This sequence belongs to the eukaryotic ribosomal protein eL21 family.

In Dictyostelium discoideum (Social amoeba), this protein is Large ribosomal subunit protein eL21 (rpl21).